Consider the following 354-residue polypeptide: MKLQTTYPSNNYPIYVEHGAIDHISTYIDQFDQSFILIDEHVNQYFADKFDDILSYENVHKVIIPAGEKTKTFEQYQETLEYILSHHVTRNTAIIAVGGGATGDFAGFIAATLLRGVHFIQVPTTILAHDSSVGGKVGINSKQGKNLIGAFYRPTAVIYDLDFLKTLPFEQILSGYAEVYKHALLNGESATQDIEQHFKDREILQSLNGMDKYIAKGIETKLDIVIADEKEQGVRKFLNLGHTFGHAVEYYHKIPHGHAVMVGIIYQFIVANALFDSKHDINHYIQYLIQLGYPLDMITDLDFETLYQYMLSDKKNDKQGVQMVLIRQFGDIVVQHVDQLTLQHACEQLKTYFK.

Residues 100–104 (GATGD), 124–125 (TT), K136, K145, and 163–166 (FLKT) contribute to the NAD(+) site. Residues E178, H242, and H256 each coordinate Zn(2+).

Belongs to the sugar phosphate cyclases superfamily. Dehydroquinate synthase family. NAD(+) serves as cofactor. Co(2+) is required as a cofactor. The cofactor is Zn(2+).

It localises to the cytoplasm. The catalysed reaction is 7-phospho-2-dehydro-3-deoxy-D-arabino-heptonate = 3-dehydroquinate + phosphate. The protein operates within metabolic intermediate biosynthesis; chorismate biosynthesis; chorismate from D-erythrose 4-phosphate and phosphoenolpyruvate: step 2/7. Functionally, catalyzes the conversion of 3-deoxy-D-arabino-heptulosonate 7-phosphate (DAHP) to dehydroquinate (DHQ). In Staphylococcus aureus (strain COL), this protein is 3-dehydroquinate synthase.